A 1363-amino-acid polypeptide reads, in one-letter code: MFLILLISLPTAFAVIGDLKCTTVSINDVDTGVPSISTDTVDVTKGLGTYYVLDRVYLNTTLLLNGYYPTSGSTYRNMALKGTLLLSTLWFKPPFLSDFTNGIFAKVKNTKVIKDGVMYSEFPAITIGSTFVNTSYSVVVQPHTTILGNKLQGFLEISVCQYTMCEYPNTICNPNLGNRRVELWHWDTGVVSCLYKRNFTYDVNADYLYFHFYQEGGTFYAYFTDTGVVTKFLFNVYLGTVLSHYYVMPLTCNSALTLEYWVTPLTSKQYLLAFNQDGVIFNAVDCKSDFMSEIKCKTLSIAPSTGVYELNGYTVQPIADVYRRIPNLPDCNIEAWLNDKSVPSPLNWERKTFSNCNFNMSSLMSFIQADSFTCNNIDAAKIYGMCFSSITIDKFAIPNGRKVDLQLGNLGYLQSFNYRIDTTATSCQLYYNLPAANVSVSRFNPSTWNRRFGFTEQSVFKPQPAGVFTDHDVVYAQHCFKAPTNFCPCKLDGSLCVGNGPGIDAGYKTSGIGTCPAGTNYLTCHNAAQCDCLCTPDPITSKATGPYKCPQTKYLVGIGEHCSGLAIKSDHCGGNPCTCQPQAFLGWSVDSCLQGDRCNIFANFILHDVNSGTTCSTDLQKSNTDIILGVCVNYDLYGITGQGIFVEVNATYYNSWQNLLYDSNGNLYGFRDYLTNRTFMIRSCYSGRVSAAFHANSSEPALLFRNIKCNYVFNNTLSRQLQPINYFDSYLGCVVNADNSTSSVVQTCDLTVGSGYCVDYSTKRRSRRSITTGYRFTNFEPFTVNSVNDSLEPVGGLYEIQIPSEFTIGNMEEFIQTSSPKVTIDCSAFVCGDYAACKSQLVEYGSFCDNINAILTEVNELLDTTQLQVANSLMNGVTLSTKLKDGVNFNVDDINFSPVLGCLGSDCNKVSSRSAIEDLLFSKVKLSDVGFVEAYNNCTGGAEIRDLICVQSYNGIKVLPPLLSENQISGYTLAATSASLFPPWSAAAGVPFYLNVQYRINGIGVTMDVLSQNQKLIANAFNNALGAIQEGFDATNSALVKIQAVVNANAETLNNLLQQLSNRFGAISSSLQEILSRLDALEAQAQIDRLINGRLTALNAYVSQQLSDSTLVKFSAAQAMEKVNECVKSQSSRINFCGNGNHIISLVQNAPYGLYFIHFSYVPTKYVTAKVSPGLCIAGGRGIAPKSGYFVNVNNTWMFTGSGYYYPEPITGNNVVVMSTCAVNYTKAPDVMLNISTPNLPDFKEELDQWFKNQTSVAPDLSLDYINVTFLDLQDEMNRLQEAIKVLNQSYINLKDIGTYEYYVKWPWYVWLLIGFAGVAMLVLLFFICCCTGCGTSCFKKCGGCCDDYTGHQELVIKTSHED.

A signal peptide spans 1 to 13; it reads MFLILLISLPTAF. The Extracellular portion of the chain corresponds to 14–1307; the sequence is AVIGDLKCTT…GTYEYYVKWP (1294 aa). The 284-residue stretch at 15 to 298 folds into the BetaCoV S1-NTD domain; it reads VIGDLKCTTV…DFMSEIKCKT (284 aa). 5 cysteine pairs are disulfide-bonded: C21–C165, C160–C193, C172–C252, C286–C296, and C331–C356. 2 N-linked (GlcNAc...) asparagine; by host glycosylation sites follow: N59 and N133. N198 is a glycosylation site (N-linked (GlcNAc...) asparagine; by host). One can recognise a BetaCoV S1-CTD domain in the interval 329-617; the sequence is PDCNIEAWLN…DVNSGTTCST (289 aa). An N-linked (GlcNAc...) asparagine; by host glycan is attached at N359. Cystine bridges form between C374–C427 and C386–C615. N-linked (GlcNAc...) asparagine; by host glycans are attached at residues N437, N649, N676, N696, N714, N739, and N788. Fusion peptide regions lie at residues 914 to 935 and 933 to 953; these read SAIE…VEAY and EAYN…VQSY. An N-linked (GlcNAc...) asparagine; by host glycan is attached at N937. Residues C938 and C949 are joined by a disulfide bond. Positions 1014–1064 are heptad repeat 1; it reads QKLIANAFNNALGAIQEGFDATNSALVKIQAVVNANAETLNNLLQQLSNRF. The stretch at 1043–1087 forms a coiled coil; the sequence is QAVVNANAETLNNLLQQLSNRFGAISSSLQEILSRLDALEAQAQI. N-linked (GlcNAc...) asparagine; by host glycosylation is found at N1194, N1224, N1234, N1253, N1267, and N1288. Residues 1258–1296 are heptad repeat 2; sequence APDLSLDYINVTFLDLQDEMNRLQEAIKVLNQSYINLKD. A coiled-coil region spans residues 1269 to 1297; sequence TFLDLQDEMNRLQEAIKVLNQSYINLKDI. Residues 1308 to 1328 traverse the membrane as a helical segment; that stretch reads WYVWLLIGFAGVAMLVLLFFI. Topologically, residues 1329–1363 are cytoplasmic; sequence CCCTGCGTSCFKKCGGCCDDYTGHQELVIKTSHED. Residues 1359-1363 carry the KxHxx motif; the sequence is TSHED.

The protein belongs to the betacoronaviruses spike protein family. As to quaternary structure, homotrimer; each monomer consists of a S1 and a S2 subunit. The resulting peplomers protrude from the virus surface as spikes. Post-translationally, specific enzymatic cleavages in vivo yield mature proteins. The precursor is processed into S1 and S2 by host cell furin or another cellular protease to yield the mature S1 and S2 proteins. Additionally, a second cleavage leads to the release of a fusion peptide after viral attachment to host cell receptor. The cytoplasmic Cys-rich domain is palmitoylated. Spike glycoprotein is digested within host endosomes.

It is found in the virion membrane. Its subcellular location is the host endoplasmic reticulum-Golgi intermediate compartment membrane. It localises to the host cell membrane. Functionally, attaches the virion to the cell membrane by interacting with host receptor, initiating the infection. In terms of biological role, mediates fusion of the virion and cellular membranes by acting as a class I viral fusion protein. Under the current model, the protein has at least three conformational states: pre-fusion native state, pre-hairpin intermediate state, and post-fusion hairpin state. During viral and target cell membrane fusion, the coiled coil regions (heptad repeats) assume a trimer-of-hairpins structure, positioning the fusion peptide in close proximity to the C-terminal region of the ectodomain. The formation of this structure appears to drive apposition and subsequent fusion of viral and target cell membranes. Its function is as follows. Acts as a viral fusion peptide which is unmasked following S2 cleavage occurring upon virus endocytosis. This is Spike glycoprotein from Bovine coronavirus (strain 98TXSF-110-LUN) (BCoV-LUN).